The primary structure comprises 520 residues: MTETAASSAERVLIFDTTLRDGEQCPGATMTFEEKLAVAEMLDGMGVDIIEAGFPIASNGDFDAVAEIARRTKTSVVAGLARAISADIARAGEAVRLAKRGRIHTFVSTSPIHLAHQMRKSEEEVLEIIQKTVAQARDLVEDVEWSAMDATRTPIDYLCRCVEMAIKMGATTINLPDTVGYATPDEYRAMFRSVRERVPNADRAIFSVHCHNDLGLAIANSLAGIEGGARQVECTINGIGERAGNAALEEVVMALRTRADVLPYTTGIDTTQIMRASKLVAAATHFPVQYNKAVVGRNAFAHESGIHQDGMLKNQSTYEIMTPESVGVQKTSLVMGKHSGRAAFRSKLEELGYRLSDNQFQDAFERFKALADRKKNVYDEDIEALVDENLATAHDRIRLLSLTVIAGTRGPQRATMRLDIDGRQATEEADGNGPVDAVFNAIHALVPHEAKLELYDVHAVTEGTDAQAEVSVRLRQGERSVTARGADPDTLVASAKAYLAALNKLLAGANRLHAQHAAAE.

Positions 12–274 (VLIFDTTLRD…TTGIDTTQIM (263 aa)) constitute a Pyruvate carboxyltransferase domain. Mn(2+) contacts are provided by D21, H209, H211, and N245. The tract at residues 398–520 (RLLSLTVIAG…RLHAQHAAAE (123 aa)) is regulatory domain.

This sequence belongs to the alpha-IPM synthase/homocitrate synthase family. LeuA type 1 subfamily. As to quaternary structure, homodimer. The cofactor is Mn(2+).

The protein localises to the cytoplasm. The enzyme catalyses 3-methyl-2-oxobutanoate + acetyl-CoA + H2O = (2S)-2-isopropylmalate + CoA + H(+). It participates in amino-acid biosynthesis; L-leucine biosynthesis; L-leucine from 3-methyl-2-oxobutanoate: step 1/4. Its function is as follows. Catalyzes the condensation of the acetyl group of acetyl-CoA with 3-methyl-2-oxobutanoate (2-ketoisovalerate) to form 3-carboxy-3-hydroxy-4-methylpentanoate (2-isopropylmalate). The polypeptide is 2-isopropylmalate synthase (Methylobacterium nodulans (strain LMG 21967 / CNCM I-2342 / ORS 2060)).